We begin with the raw amino-acid sequence, 307 residues long: Ribonuclease Z (307 aa).

Zn(2+) contacts are provided by His-61, His-63, Asp-65, His-66, His-138, Asp-208, and His-264. Asp-65 serves as the catalytic Proton acceptor.

It belongs to the RNase Z family. Homodimer. Requires Zn(2+) as cofactor.

The catalysed reaction is Endonucleolytic cleavage of RNA, removing extra 3' nucleotides from tRNA precursor, generating 3' termini of tRNAs. A 3'-hydroxy group is left at the tRNA terminus and a 5'-phosphoryl group is left at the trailer molecule.. Its function is as follows. Zinc phosphodiesterase, which displays some tRNA 3'-processing endonuclease activity. Probably involved in tRNA maturation, by removing a 3'-trailer from precursor tRNA. Also shows activity toward a broad range of substrates, such as intron containing pre-tRNAs, 5' extended precursors and non-RNA substrates. The protein is Ribonuclease Z of Pyrococcus furiosus (strain ATCC 43587 / DSM 3638 / JCM 8422 / Vc1).